The chain runs to 295 residues: ATP synthase gamma chain (295 aa).

It belongs to the ATPase gamma chain family. F-type ATPases have 2 components, CF(1) - the catalytic core - and CF(0) - the membrane proton channel. CF(1) has five subunits: alpha(3), beta(3), gamma(1), delta(1), epsilon(1). CF(0) has three main subunits: a, b and c.

It localises to the cell inner membrane. Its function is as follows. Produces ATP from ADP in the presence of a proton gradient across the membrane. The gamma chain is believed to be important in regulating ATPase activity and the flow of protons through the CF(0) complex. The sequence is that of ATP synthase gamma chain from Campylobacter curvus (strain 525.92).